Here is a 429-residue protein sequence, read N- to C-terminus: MANVTVIGAQWGDEGKGKIVDWLAERAHVVVRFQGGHNAGHTLVVGNQTYKLSLLPSGIVRGTLSVIGNGVVFDPWHFRDEVAKLQGQGVTITPDNLQIAETAPLILPFHRDLDGLREDASGSGKIGTTRRGIGPAYEDKVGRRAIRVCDLAHLDDLELQLDRICAHHDALRAGFNEPPIDREALKAQLAEIADFILPFAKPVWLTLNEARKAGRRILFEGAQGVLLDIDHGTYPFVTSSNTIAGTASGGSGLGPSAAGFVLGIVKAYTTRVGSGPFPSELEDEMGQRLGERGHEFGTVTGRKRRCGWFDAVLVRQSAAVSGITGVALTKLDVLDGFDEIKICTGYELDGKTYDYLPPHPQDQARVTPIYETIEGWSQSTAGARSWAELPAQAIKYIRRVEELIQCPVALVSTSPEREDTILVRDPFAD.

GTP-binding positions include 12 to 18 and 40 to 42; these read GDEGKGK and GHT. The active-site Proton acceptor is Asp13. The Mg(2+) site is built by Asp13 and Gly40. Residues 13-16, 38-41, Thr129, Arg143, Gln223, Thr238, and Arg302 contribute to the IMP site; these read DEGK and NAGH. The active-site Proton donor is His41. 298–304 is a substrate binding site; the sequence is TVTGRKR. Residues Arg304, 330–332, and 412–414 contribute to the GTP site; these read KLD and STS.

Belongs to the adenylosuccinate synthetase family. Homodimer. Mg(2+) is required as a cofactor.

The protein localises to the cytoplasm. The catalysed reaction is IMP + L-aspartate + GTP = N(6)-(1,2-dicarboxyethyl)-AMP + GDP + phosphate + 2 H(+). It participates in purine metabolism; AMP biosynthesis via de novo pathway; AMP from IMP: step 1/2. In terms of biological role, plays an important role in the de novo pathway of purine nucleotide biosynthesis. Catalyzes the first committed step in the biosynthesis of AMP from IMP. This chain is Adenylosuccinate synthetase, found in Rhizorhabdus wittichii (strain DSM 6014 / CCUG 31198 / JCM 15750 / NBRC 105917 / EY 4224 / RW1) (Sphingomonas wittichii).